The sequence spans 201 residues: Phosphoheptose isomerase 2 (201 aa).

In terms of domain architecture, SIS spans 39–198; it reads VIKAYKNGNK…EEELFGKGFS (160 aa). 54 to 56 is a substrate binding site; sequence NGG. 2 residues coordinate Zn(2+): His-63 and Glu-67. Substrate is bound by residues Glu-67, 96–97, 122–124, Ser-127, and Gln-174; these read ND and STS. 2 residues coordinate Zn(2+): Gln-174 and His-182.

It belongs to the SIS family. GmhA subfamily. As to quaternary structure, homotetramer. Requires Zn(2+) as cofactor.

It localises to the cytoplasm. It carries out the reaction 2 D-sedoheptulose 7-phosphate = D-glycero-alpha-D-manno-heptose 7-phosphate + D-glycero-beta-D-manno-heptose 7-phosphate. It participates in carbohydrate biosynthesis; D-glycero-D-manno-heptose 7-phosphate biosynthesis; D-glycero-alpha-D-manno-heptose 7-phosphate and D-glycero-beta-D-manno-heptose 7-phosphate from sedoheptulose 7-phosphate: step 1/1. Its pathway is capsule biogenesis; capsule polysaccharide biosynthesis. Functionally, catalyzes the isomerization of sedoheptulose 7-phosphate in D-glycero-D-manno-heptose 7-phosphate. No activity with L-galacto-heptulose, L-galacto-heptulose 7-phosphate or D-manno-heptulose. This Campylobacter jejuni subsp. jejuni serotype O:2 (strain ATCC 700819 / NCTC 11168) protein is Phosphoheptose isomerase 2.